A 414-amino-acid polypeptide reads, in one-letter code: Myb1 protein (414 aa).

3 Myb-like domains span residues 242–266 (WNEV…LYYG), 268–320 (FEDD…IKIN), and 328–381 (KVKL…TNLN).

Its subcellular location is the nucleus. In terms of biological role, transcriptional activator. Has a role in the parasite erythrocytic cycle where it directly regulates key genes involved in cell cycle regulation and progression. Binds directly to Myb regulatory elements. In Plasmodium falciparum (isolate 3D7), this protein is Myb1 protein.